Here is a 61-residue protein sequence, read N- to C-terminus: Conotoxin Vn5.3 (61 aa).

Residues 1–19 form the signal peptide; the sequence is MRCLPVFVILLLLIASAPG. A propeptide spanning residues 20–50 is cleaved from the precursor; it reads VDVQPKTKYYVPRASRRDFAKKTPKRLSKLR.

The protein belongs to the conotoxin T superfamily. Post-translationally, contains 2 disulfide bonds that can be either 'C1-C3, C2-C4' or 'C1-C4, C2-C3', since these disulfide connectivities have been observed for conotoxins with cysteine framework V (for examples, see AC P0DQQ7 and AC P81755). In terms of tissue distribution, expressed by the venom duct.

The protein resides in the secreted. The protein is Conotoxin Vn5.3 of Conus ventricosus (Mediterranean cone).